A 455-amino-acid chain; its full sequence is uncharacterized protein (455 aa).

The next 11 helical transmembrane spans lie at 26-46 (FGPG…QLLI), 53-73 (GAWG…ISIG), 77-97 (LGVM…RSTA), 111-131 (WVVA…LAVI), 146-166 (ALRA…TGVW), 191-211 (AAGV…SLVV), 232-252 (LTVL…AIAV), 256-276 (AHIG…IPAL), 278-298 (ILAA…LIVG), 323-343 (LLVA…GGGG), and 357-377 (ALVL…VVIA). The segment at 384-455 (PKRLRPAPPV…LSDEPPPRAD (72 aa)) is disordered.

The protein localises to the cell membrane. This is an uncharacterized protein from Mycobacterium tuberculosis (strain CDC 1551 / Oshkosh).